The sequence spans 253 residues: 7-carboxy-7-deazaguanine synthase (253 aa).

Residues 12–14 (WQG) and Arg32 contribute to the substrate site. In terms of domain architecture, Radical SAM core spans 23-253 (AFGRRQIFVR…FQVHKYLNVL (231 aa)). [4Fe-4S] cluster-binding residues include Cys36, Cys40, and Cys43. Ser45 provides a ligand contact to Mg(2+). Position 98 (Thr98) interacts with substrate. Residue Gly100 participates in S-adenosyl-L-methionine binding.

Belongs to the radical SAM superfamily. 7-carboxy-7-deazaguanine synthase family. Homodimer. [4Fe-4S] cluster serves as cofactor. Requires S-adenosyl-L-methionine as cofactor. The cofactor is Mg(2+).

It catalyses the reaction 6-carboxy-5,6,7,8-tetrahydropterin + H(+) = 7-carboxy-7-deazaguanine + NH4(+). The protein operates within purine metabolism; 7-cyano-7-deazaguanine biosynthesis. Functionally, catalyzes the complex heterocyclic radical-mediated conversion of 6-carboxy-5,6,7,8-tetrahydropterin (CPH4) to 7-carboxy-7-deazaguanine (CDG), a step common to the biosynthetic pathways of all 7-deazapurine-containing compounds. This is 7-carboxy-7-deazaguanine synthase from Thermococcus kodakarensis (strain ATCC BAA-918 / JCM 12380 / KOD1) (Pyrococcus kodakaraensis (strain KOD1)).